The sequence spans 150 residues: D-aminoacyl-tRNA deacylase (150 aa).

The Gly-cisPro motif, important for rejection of L-amino acids motif lies at 138 to 139 (GP).

It belongs to the DTD family. In terms of assembly, homodimer.

Its subcellular location is the cytoplasm. It catalyses the reaction glycyl-tRNA(Ala) + H2O = tRNA(Ala) + glycine + H(+). The catalysed reaction is a D-aminoacyl-tRNA + H2O = a tRNA + a D-alpha-amino acid + H(+). Its function is as follows. An aminoacyl-tRNA editing enzyme that deacylates mischarged D-aminoacyl-tRNAs. Also deacylates mischarged glycyl-tRNA(Ala), protecting cells against glycine mischarging by AlaRS. Acts via tRNA-based rather than protein-based catalysis; rejects L-amino acids rather than detecting D-amino acids in the active site. By recycling D-aminoacyl-tRNA to D-amino acids and free tRNA molecules, this enzyme counteracts the toxicity associated with the formation of D-aminoacyl-tRNA entities in vivo and helps enforce protein L-homochirality. This Flavobacterium psychrophilum (strain ATCC 49511 / DSM 21280 / CIP 103535 / JIP02/86) protein is D-aminoacyl-tRNA deacylase.